The chain runs to 224 residues: uncharacterized protein (224 aa).

The next 6 helical transmembrane spans lie at 25–45 (MMLALAIITSLISEFISIPFF), 54–74 (ISVVFLVACAFFVSLGWSLTI), 91–111 (IGVLTVTLANLSTILFTRLYF), 119–139 (FCWIFVFLFTTLSNALLLTTL), 142–162 (ILITPLFWYYFGYVQTPNFLI), and 174–194 (HFFFFGINNYWLGIFCLYSFF).

It localises to the cell membrane. This is an uncharacterized protein from Mycoplasma genitalium (strain ATCC 33530 / DSM 19775 / NCTC 10195 / G37) (Mycoplasmoides genitalium).